A 395-amino-acid polypeptide reads, in one-letter code: Elongation factor Tu (395 aa).

Residues 10–204 (LPHVNIGTIG…AVDEYIPTPQ (195 aa)) enclose the tr-type G domain. Residues 19–26 (GHVDHGKT) form a G1 region. GTP is bound at residue 19–26 (GHVDHGKT). Mg(2+) is bound at residue Thr26. The G2 stretch occupies residues 60-64 (GITIN). The segment at 81–84 (DCPG) is G3. Residues 81–85 (DCPGH) and 136–139 (NKCD) contribute to the GTP site. Residues 136–139 (NKCD) form a G4 region. The interval 174–176 (SAL) is G5.

It belongs to the TRAFAC class translation factor GTPase superfamily. Classic translation factor GTPase family. EF-Tu/EF-1A subfamily. As to quaternary structure, monomer.

The protein localises to the cytoplasm. It carries out the reaction GTP + H2O = GDP + phosphate + H(+). Functionally, GTP hydrolase that promotes the GTP-dependent binding of aminoacyl-tRNA to the A-site of ribosomes during protein biosynthesis. The protein is Elongation factor Tu of Mycoplasma capricolum subsp. capricolum (strain California kid / ATCC 27343 / NCTC 10154).